A 1446-amino-acid chain; its full sequence is MKDYIYQNTLINKKQLKELLAWSFSKYDSMQASLLADELKYLGFKYATQAGISISIEDLKVPATKNEMLEKANKDILNAEKICLKGKITDVERFQKIIDTWSIASESLKDNVVSYFKTYDPLNSVYIMAFSGARGNLSQVRQLVGMRGLMADPSGEIMRVPIKKNFREGLTITDYLMSGYGARKGIVDTALKTANSGYLTRRLIDIAQDIVIREKDCLTSSSFLIDSQTKFDTEQLIGRVLLKSVYDSKTEKLIAKANTQLTLDLLNLFNQKQISKFYIRSPLTCNLYHSICQMCYGWDLSNQNLVDLGEAVGILAGQSIGEPGTQLTMRTFHTGGIFTSEARQQIISPKNGIIKFSKILKTIILRTNRGEDVLLTKNSGSLILIPEKHTDEIIQIELLRNTMLFVKSNQYIKQSAIIGELISTDKQTLTERKPILSDTAGEIFIPRLKTRMNLITQNRLLWILSGQVYQAPSNSFLNFYTDHKINKNSYIFRTKLINQYSGYTKVLNQNKNLLEQKIQITNETYFLENSYVQKILKPITNKNYLLNFNNLTYLITLKDSNSKNWKRCKKYKPFATSFNNNFKTLTGGIMYYDQRIKQKFDSFNTLISYNIAYEISKEDYDKVSKDHYENYLKKLENKIDKNGFIFYQNFLNYQEMESIFLKFKLKKKIVHNSLIWLSEETYKLNCDKNILLVENGNFIAKNFEIIPNIISKTAGIITVSQKNNMIEEIAIKAGFVYQGKQFEQLDKKVYYPGEIIFDNIKITQPSLCEHINNKSNNQLLIRPFAIYEIPKEKTVKSLFSDKNNSKSIFTITNKITYLYKTNQKIKTSNHINLISQNINLKAKNSVQNNTIIDLSNSFKTKRLNLRISENLLLKHYIPAHLKYTNLQYCLLVEPTQFIDSYTTLGYLESLITNSLEIVKFKSKRANKKQVFLISNKDCITVRKEQGKNKTANELIIDNINVNQTGKVLIDNGQFLTVQKGRPYFFPNCKSDDSKEKLDLQYKLIGLNNTISNNTNTFLNYYDVTKRSLVERLGPNKKSYGFKVKFSKMFIKKNGKFYSSPIPLFLNNFSIIKEEQKRLNEGKNEINNFIIKNTQLKIKQCLPLLLKSSELVTNKIKRKTPFNNNLTGLKFLKYPFNKSIGIHSLTEDYFEQEVNNVYCKNGEFIEKGEVIGLLNFEKEITGDIVQGLPRIEELLEARKKKPTNKHLATNQKKSLLIQKTSIDSSFEFQKLGTTIKENDKINPHNLLKIYFNYYGIKKQFFSNKEMFALSYRLTDNYEASYRTFKKIQLLILNAVQSVYESQGVSIANKHLEVIIKQMTTKVLITHEGHTPLLPREVVDLYHIQYINKIIEAHNKRPAYYVPLLLGITKAALNNPSFISAASFQETTRVLTKAAIEGRVDWLRGLKENIIIGHLIPSGTGYQSYSNCFNQLAQSKTKINLEKIKIKI.

Zn(2+)-binding residues include Cys217, Cys285, Cys292, and Cys295.

The protein belongs to the RNA polymerase beta' chain family. RpoC2 subfamily. In terms of assembly, in plastids the minimal PEP RNA polymerase catalytic core is composed of four subunits: alpha, beta, beta', and beta''. When a (nuclear-encoded) sigma factor is associated with the core the holoenzyme is formed, which can initiate transcription. Requires Zn(2+) as cofactor.

Its subcellular location is the plastid. It localises to the chloroplast. The enzyme catalyses RNA(n) + a ribonucleoside 5'-triphosphate = RNA(n+1) + diphosphate. Its function is as follows. DNA-dependent RNA polymerase catalyzes the transcription of DNA into RNA using the four ribonucleoside triphosphates as substrates. The polypeptide is DNA-directed RNA polymerase subunit beta'' (Thalassiosira pseudonana (Marine diatom)).